A 196-amino-acid chain; its full sequence is Small ribosomal subunit protein uS4c (196 aa).

Positions 15–43 (LGALPGLTRKTPKSGSNQKKKFHSGKKEQ) are disordered. The 62-residue stretch at 89-150 (MRLDNILFRL…NQRSKRLVQN (62 aa)) folds into the S4 RNA-binding domain.

The protein belongs to the universal ribosomal protein uS4 family. In terms of assembly, part of the 30S ribosomal subunit. Contacts protein S5. The interaction surface between S4 and S5 is involved in control of translational fidelity.

The protein localises to the plastid. It localises to the chloroplast. In terms of biological role, one of the primary rRNA binding proteins, it binds directly to 16S rRNA where it nucleates assembly of the body of the 30S subunit. Its function is as follows. With S5 and S12 plays an important role in translational accuracy. The protein is Small ribosomal subunit protein uS4c (rps4) of Bothriochloa ischaemum (Yellow bluestem).